Reading from the N-terminus, the 293-residue chain is MITFSSMLLKLQEFWMKQGCNIVQPYDIPAGAGTFHPATFLRSLDSTPWSVAYVAPSRRPTDGRYGENPNRLGSYYQFQALIKPSPDNIQELYLKSLEYLGLDVKNHDIRFVEDNWESPTLGAWGLGWEVWLNGMEVTQFTYFQQVGGIECNPVAVEITYGTERLAMYLQGVDTVFDIVWGENEHGKTLYRDVHKEAEIEFSKYNFEIADTEMLFAEFNAKSAECLKTIEARLPLPAYDLCMMAASTFNVLDARKAISQTERQNYILKIRELSKGCAELYKAQEEDRNKRVKG.

Belongs to the class-II aminoacyl-tRNA synthetase family. In terms of assembly, tetramer of two alpha and two beta subunits.

The protein resides in the cytoplasm. The catalysed reaction is tRNA(Gly) + glycine + ATP = glycyl-tRNA(Gly) + AMP + diphosphate. This chain is Glycine--tRNA ligase alpha subunit, found in Sulfurimonas denitrificans (strain ATCC 33889 / DSM 1251) (Thiomicrospira denitrificans (strain ATCC 33889 / DSM 1251)).